Reading from the N-terminus, the 95-residue chain is Co-chaperonin GroES (95 aa).

This sequence belongs to the GroES chaperonin family. Heptamer of 7 subunits arranged in a ring. Interacts with the chaperonin GroEL.

It is found in the cytoplasm. In terms of biological role, together with the chaperonin GroEL, plays an essential role in assisting protein folding. The GroEL-GroES system forms a nano-cage that allows encapsulation of the non-native substrate proteins and provides a physical environment optimized to promote and accelerate protein folding. GroES binds to the apical surface of the GroEL ring, thereby capping the opening of the GroEL channel. The protein is Co-chaperonin GroES of Chlorobium limicola (strain DSM 245 / NBRC 103803 / 6330).